A 55-amino-acid polypeptide reads, in one-letter code: Large ribosomal subunit protein bL33 (55 aa).

Belongs to the bacterial ribosomal protein bL33 family.

The chain is Large ribosomal subunit protein bL33 from Azoarcus sp. (strain BH72).